A 618-amino-acid chain; its full sequence is Very-long-chain aldehyde decarbonylase GL1-3 (618 aa).

7 helical membrane passes run 9–29, 46–66, 91–111, 121–141, 174–194, 289–309, and 315–335; these read LSSWPWAFLGSYKYLLYGPVV, TSWCLHLILLLALRSLTMLFF, MVIMQTLIAAVLVTSRVFPAT, GWAIAVVLHVAVSEPAFYWAH, LESLILTLVAWAPLAGAFMAG, DFVFLVHVVDVVSSMHVPFAF, and LPFATHLVLLPLWPIAFGFML. The Fatty acid hydroxylase domain maps to 127-267; the sequence is VLHVAVSEPA…MPLFDALGGT (141 aa).

The protein belongs to the sterol desaturase family. As to quaternary structure, homodimer. Expressed in germinating seeds and stamens.

The protein resides in the endoplasmic reticulum membrane. The catalysed reaction is a long-chain fatty aldehyde + 2 NADPH + O2 + H(+) = a long-chain alkane + formate + 2 NADP(+) + H2O. Aldehyde decarbonylase involved in the conversion of aldehydes to alkanes. Core component of a very-long-chain alkane synthesis complex. This is Very-long-chain aldehyde decarbonylase GL1-3 from Oryza sativa subsp. japonica (Rice).